Reading from the N-terminus, the 223-residue chain is Putative lipoprotein NMB1126/NMB1164 (223 aa).

Positions 1 to 19 are cleaved as a signal peptide; that stretch reads MKTVSTAVVLAAAAVSLTG. Cys20 carries N-palmitoyl cysteine lipidation. Cys20 carries S-diacylglycerol cysteine lipidation.

It localises to the cell membrane. This chain is Putative lipoprotein NMB1126/NMB1164, found in Neisseria meningitidis serogroup B (strain ATCC BAA-335 / MC58).